Consider the following 2909-residue polypeptide: MVFRATREPFRLPLVAAFIALFLLKGVTCQLQLGTSTLQKNMWTTVKFDEPMIDPVVFVSPPEAPTNSFALVLIGGVTTSGFRARVYFPSCEYSPSGGTLYAVRWLAVEATSAGYYDSSNRQTIDWTAHAVTLASSGTIPAGYVWSQSFSAWEDRPGTPGVLIGVQNHREMISAMYWSSEYLNPLVINSNSGGTLTFSFLRQISHRIGFTLKVGIFQYDARRGAVINGVNLVAQRYDLKVNEVLPVADVVAGGTTPATFAVQWVTPTEAPLALVVKPKLLPDGSYSESLVAVEDCRNGATYEPHAFDVTHAFTGNPASTAHRINGGPNCFRPSASVPTWLTEPCKLACESLWTANSDDYWNCDDVNACFETDFRSAETLMALPQIDESIADVLVTSCNFATRTADLIKQYEYAVNLKVDDIAIGTMWSTSSHCGGDKMEVEIVGAFYEKLGVSILTGSTCEVQDVSREVEALCKAEGGIGCSISAAQIYELIMNYPGVCFALEDAELQIFFNCTFASTSPFDCELYESKGFDQENGDCMCPNALAACTREEATFKSGWLQNLNKSYQYMLHGQIRYVAKSSVFQAFYEAPETSSAGDNTLCARMNTIVVCKNPTPVSAVVGNRGPNCYVIEHGSQYCHLPCLTAWDAFLAAKDLPQQSDYQAEFERFWLSFDFPAIPPHTSQSLLEQLQRCRFATRPATAPLQQYEDEIDVQLPDYGAVIIPLGCDKLHHREVVQALVGSASSIMLGVHEPGCRYEDATETVQRECKAAVSARKTTCEIDSSLFTSKDILCNTSTIKLIIRGTCIPGPYLPTNYTCALYPTTGVVSRDGRSCTCPNSAYPCTYEEGQLTASRWKNEVNTGATVSLANNVVWTAPPGTSEYTYTHTDAYDYVCSTDEHHFVLCKDLTPSALPLTEREPHCLNSFSVKPDASTVDDRDCQDQCASLFATRCRQSFYKWLCVAQGLPECYIPNTDSFTCQIDTNPSAYNYSYGSCGCSGAYPPCSRNEANATRLDWITAFRALSHKKGVVVARGKQALWTENPDRWRYENGMLQGGGCLNNSWFVGVFCGAHLSVTPPARGDVLPLCSSAAKVENPDTPYPACRVLCAQVLNECKKVFSTTEGAAAYASVFDCFKARGKGTTLDNCTYELGPENRATGVAELHTGWTVASASWSRVLFDVEFADPPVVFLGIPKDTQPFYTPSVRLVTKTSFEVKLYRNNCGLDDTRSSSAPVSWMAIPEGAYLTDFVENPVRVMKLPMTTRTPTVLTFSLSGLKEPEEMVALAQVQDVTPTSVSTDRVAVVISNLKTNSLELSLVVDESVNFSTVAVGILISGKQNPDLAAGLSPLLNRYHLQTFRIPAAAYSATSILGEGLYLSGGIMPHVFAAAIQTRSMTKELNESDRVVISRRATTTPFTWSALLWKKTCEAKHMFEAVENPSDLIIAGIYVEARKDEPSAILGNRHDLCLSFIGQSFESGVVATCMGACRSALPASVQLHCQDECALNIFAPSVHTKCMTDCESLLVAQYEECAGQCTATGTASCQRKCKQFLGNKCDSTASSDVAACLEFVTPPSVFEQCTLLVEYSVSEGGPSDGFEIEEETTPSQTYENCIIVDMRDERFTAFTGWDSRVASCKCPNDFRACTSETVNTQNHWRTELLASAGLCKEQPDGRFNAVTQQLWSTTGDLCALAADEQQPPISWASNMLPAYVDQDIVLDNSTIRSGDYQCREIWHYVVCPAAATSTTTQEPPVPPFTATLNTAIVGEWGEWSACTGTCFSQWWTPKRTRTRLVLAELSHSQIPSVSETATCLDLPPCGTVCWEREWTEWSECKLFTIVMGQGLEYFRQQIKPVFDFVEEACGLDEHERYERCGEEQDNGETPATSTLQTDSLLETRSLTVSHGTAARALPRVSMDPALERPSFASLHGTRSHVPASTDAKIIERRKGIMSRRRSVPPSGYLEETAEQVAHGGESEQSGKASQNGSRRHRASRKQKRDLESIYSDASVRGSGESTLHGTGTNAYRDQIEWTSKSSSRSAIRDSGARGAEAGTSLLQKARRARRGAGRFRKSRSQARNQTPDKSCSVVSEWSGCDSPCLPHKGSTPRRYRLAVPGQNEANYCTVPLSGTEHLCTDLPQCAHPNFDCAKVTASRLTDEDIAACKAVCVEVVKTCETMMSAVFSLYTSLEQCALVQFQEYEQFPGQCHIPEEYTSTRRPTKCFPSRTRRRVASGELPFIFQVSTASGTSPSATSDAASSVAESFVSTGTASAPSSRVMNALAFEASASQTSIDSCECYDPADEPCTAQEARDSLFDSLYLFLTHPLCAESPAAEGALFTMSEPNQTADAASYFALRGLGRMHCPVPMYKSSTEVKGVLTPKRVTFSEFKTKEDLNEFCHKGLSNWRQNVPPEIIGSASFPNCMLVTPREGAEPQDCALLCSETMSSCSAASLSFVELSQCVQDKLTESDFYSKCSAPEVLAPGEGIILCKKKVSTCDYTEWSEWSTCTATCFNWDEGVIPLRVRSRDFASSSADSRVLCRLESQNDAIQTEKCDWMPVCPEAEGEEEDDATGGVEPRGEPIVPPWSPERPTDENNQAMGSEDIVSGTVECYVTNMGTIMTSYYRGYNQEYHGCNCPGGRRPCTRAEAVASLDLWTKDSGGLCDQDMATMISAAEGEAFFCATGSFGKIDTSLSESSCASSEYQYVLCEGHPYEGIANLTTWVICLLLGVGGGICFVLSCVQYSSDIQKLLGLAGSYPVLVQNVTELQERESHKLRRQGNISATSERSDAHALSLSDSGWDVDGNQSAGSAFPEEEPWQFEDRDEEPLLSTRKYSRNLGSAGIPEPSEIGQTSPTQQRVPRASLAAQRSTCQLSSRLGQANSPEQSLERRSLKLRDSHADVELQRTLRKEMKGNQVWDKTV.

Residues 1-29 (MVFRATREPFRLPLVAAFIALFLLKGVTC) form the signal peptide. Residues Asn-512, Asn-563, Asn-792, Asn-813, Asn-986, Asn-1007, Asn-1057, Asn-1142, Asn-1319, Asn-1395, and Asn-1713 are each glycosylated (N-linked (GlcNAc...) asparagine). Residues 1755–1811 (TAIVGEWGEWSACTGTCFSQWWTPKRTRTRLVLAELSHSQIPSVSETATCLDLPPCG) form the TSP type-1 1 domain. Residues 1937-2073 (RRKGIMSRRR…RSQARNQTPD (137 aa)) form a disordered region. The span at 1967–1977 (SEQSGKASQNG) shows a compositional bias: polar residues. N-linked (GlcNAc...) asparagine glycosylation is present at Asn-1976. A compositionally biased stretch (basic residues) spans 1978 to 1988 (SRRHRASRKQK). Positions 2004–2016 (GESTLHGTGTNAY) are enriched in polar residues. Residues 2049-2065 (KARRARRGAGRFRKSRS) show a composition bias toward basic residues. An N-linked (GlcNAc...) asparagine glycan is attached at Asn-2333. Residues 2484-2549 (TCDYTEWSEW…EKCDWMPVCP (66 aa)) enclose the TSP type-1 2 domain. 3 disulfides stabilise this stretch: Cys-2485/Cys-2528, Cys-2496/Cys-2500, and Cys-2542/Cys-2548. The disordered stretch occupies residues 2552-2587 (EGEEEDDATGGVEPRGEPIVPPWSPERPTDENNQAM). N-linked (GlcNAc...) asparagine glycosylation occurs at Asn-2706. A helical membrane pass occupies residues 2709-2729 (TWVICLLLGVGGGICFVLSCV). 3 N-linked (GlcNAc...) asparagine glycosylation sites follow: Asn-2751, Asn-2768, and Asn-2793. A disordered region spans residues 2759-2846 (ESHKLRRQGN…IGQTSPTQQR (88 aa)). The span at 2801–2815 (PEEEPWQFEDRDEEP) shows a compositional bias: acidic residues. The segment covering 2837 to 2846 (IGQTSPTQQR) has biased composition (polar residues).

In terms of assembly, component of a complex, at least composed of cysteine repeat modular protein A (CRMPa), cysteine repeat modular protein B (CRMPb), micronemal protein 15 (MIC15) and thrombospondin type 1 domain-containing protein (TSP1).

The protein resides in the membrane. Functionally, required for rhoptry secretion. Plays a role in host cell invasion. This chain is Micronemal protein 15, found in Toxoplasma gondii.